The chain runs to 327 residues: L-serine dehydratase/L-threonine deaminase (327 aa).

Ala2 bears the N-acetylalanine mark. Position 41 is an N6-(pyridoxal phosphate)lysine (Lys41). Position 128 (Pro128) interacts with pyridoxal 5'-phosphate.

It belongs to the serine/threonine dehydratase family. In terms of assembly, homodimer. Pyridoxal 5'-phosphate serves as cofactor.

Its subcellular location is the cytoplasm. It catalyses the reaction L-serine = pyruvate + NH4(+). It carries out the reaction L-threonine = 2-oxobutanoate + NH4(+). The protein operates within carbohydrate biosynthesis; gluconeogenesis. In terms of biological role, catalyzes the pyridoxal-phosphate-dependent dehydrative deamination of L-threonine and L-serine to ammonia and alpha-ketobutyrate and pyruvate, respectively. The chain is L-serine dehydratase/L-threonine deaminase (Sds) from Mus musculus (Mouse).